Here is a 314-residue protein sequence, read N- to C-terminus: MENKTEVTQFILLGLTNDSELQVPLFITFPFIYIITLVGNLGIIVLIFWDSCLHNPMYFFLSNLSLVDFCYSSAVTPIVMAGFLIEDKVISYNACAAQMYIFVAFATVENYLLASMAYDRYAAVCKPLHYTTTMTTTVCARLAIGSYLCGFLNASIHTGDTFSLSFCKSNEVHHFFCDIPAVMVLSCSDRHISELVLIYVVSFNIFIALLVILISYTFIFITILKMHSASVYQKPLSTCASHFIAVGIFYGTIIFMYLQPSSSHSMDTDKMAPVFYTMVIPMLNPLVYSLRNKEVKSAFKKVVEKAKLSVGWSV.

Topologically, residues 1 to 23 (MENKTEVTQFILLGLTNDSELQV) are extracellular. N-linked (GlcNAc...) asparagine glycosylation is found at Asn-3 and Asn-17. A helical transmembrane segment spans residues 24–44 (PLFITFPFIYIITLVGNLGII). Residues 45–52 (VLIFWDSC) are Cytoplasmic-facing. Residues 53-73 (LHNPMYFFLSNLSLVDFCYSS) traverse the membrane as a helical segment. Topologically, residues 74–97 (AVTPIVMAGFLIEDKVISYNACAA) are extracellular. A disulfide bridge links Cys-95 with Cys-187. Residues 98–118 (QMYIFVAFATVENYLLASMAY) form a helical membrane-spanning segment. Residues 119-131 (DRYAAVCKPLHYT) lie on the Cytoplasmic side of the membrane. A helical transmembrane segment spans residues 132–152 (TTMTTTVCARLAIGSYLCGFL). Asn-153 carries N-linked (GlcNAc...) asparagine glycosylation. Over 153–194 (NASIHTGDTFSLSFCKSNEVHHFFCDIPAVMVLSCSDRHISE) the chain is Extracellular. Residues 195–215 (LVLIYVVSFNIFIALLVILIS) form a helical membrane-spanning segment. Residues 216-235 (YTFIFITILKMHSASVYQKP) are Cytoplasmic-facing. The helical transmembrane segment at 236–256 (LSTCASHFIAVGIFYGTIIFM) threads the bilayer. Residues 257-269 (YLQPSSSHSMDTD) lie on the Extracellular side of the membrane. A helical transmembrane segment spans residues 270 to 290 (KMAPVFYTMVIPMLNPLVYSL). Topologically, residues 291-314 (RNKEVKSAFKKVVEKAKLSVGWSV) are cytoplasmic.

It belongs to the G-protein coupled receptor 1 family.

It is found in the cell membrane. Its function is as follows. Odorant receptor. This is Olfactory receptor 5B3 (OR5B3) from Homo sapiens (Human).